The primary structure comprises 353 residues: Photosystem II protein D1 (353 aa).

Thr2 bears the N-acetylthreonine mark. Thr2 bears the Phosphothreonine mark. Transmembrane regions (helical) follow at residues 29 to 46 (YIGW…TATS), 118 to 133 (HFFL…EWEL), and 142 to 156 (WIAV…AATA). Position 118 (His118) interacts with chlorophyll a. Tyr126 contacts pheophytin a. The [CaMn4O5] cluster site is built by Asp170 and Glu189. A helical transmembrane segment spans residues 197–218 (FHMLGVAGVFGGSLFSAMHGSL). His198 is a binding site for chlorophyll a. Residues His215 and 264 to 265 (SF) each bind a quinone. His215 contributes to the Fe cation binding site. A Fe cation-binding site is contributed by His272. Residues 274-288 (FLAAWPVVGIWFTAL) form a helical membrane-spanning segment. Residues His332, Glu333, Asp342, and Ala344 each coordinate [CaMn4O5] cluster. The propeptide occupies 345 to 353 (VVEAPAVNG).

Belongs to the reaction center PufL/M/PsbA/D family. PSII is composed of 1 copy each of membrane proteins PsbA, PsbB, PsbC, PsbD, PsbE, PsbF, PsbH, PsbI, PsbJ, PsbK, PsbL, PsbM, PsbT, PsbX, PsbY, PsbZ, Psb30/Ycf12, at least 3 peripheral proteins of the oxygen-evolving complex and a large number of cofactors. It forms dimeric complexes. Requires The D1/D2 heterodimer binds P680, chlorophylls that are the primary electron donor of PSII, and subsequent electron acceptors. It shares a non-heme iron and each subunit binds pheophytin, quinone, additional chlorophylls, carotenoids and lipids. D1 provides most of the ligands for the Mn4-Ca-O5 cluster of the oxygen-evolving complex (OEC). There is also a Cl(-1) ion associated with D1 and D2, which is required for oxygen evolution. The PSII complex binds additional chlorophylls, carotenoids and specific lipids. as cofactor. In terms of processing, tyr-161 forms a radical intermediate that is referred to as redox-active TyrZ, YZ or Y-Z. Post-translationally, C-terminally processed by CTPA; processing is essential to allow assembly of the oxygen-evolving complex and thus photosynthetic growth.

The protein localises to the plastid. It localises to the chloroplast thylakoid membrane. It carries out the reaction 2 a plastoquinone + 4 hnu + 2 H2O = 2 a plastoquinol + O2. In terms of biological role, photosystem II (PSII) is a light-driven water:plastoquinone oxidoreductase that uses light energy to abstract electrons from H(2)O, generating O(2) and a proton gradient subsequently used for ATP formation. It consists of a core antenna complex that captures photons, and an electron transfer chain that converts photonic excitation into a charge separation. The D1/D2 (PsbA/PsbD) reaction center heterodimer binds P680, the primary electron donor of PSII as well as several subsequent electron acceptors. The protein is Photosystem II protein D1 of Chlorella vulgaris (Green alga).